The primary structure comprises 82 residues: ATP synthase subunit c (82 aa).

A run of 2 helical transmembrane segments spans residues 7–27 and 53–73; these read LVAL…CIGI and FLLA…AMLF.

The protein belongs to the ATPase C chain family. In terms of assembly, F-type ATPases have 2 components, F(1) - the catalytic core - and F(0) - the membrane proton channel. F(1) has five subunits: alpha(3), beta(3), gamma(1), delta(1), epsilon(1). F(0) has three main subunits: a(1), b(2) and c(10-14). The alpha and beta chains form an alternating ring which encloses part of the gamma chain. F(1) is attached to F(0) by a central stalk formed by the gamma and epsilon chains, while a peripheral stalk is formed by the delta and b chains.

Its subcellular location is the cell inner membrane. Functionally, f(1)F(0) ATP synthase produces ATP from ADP in the presence of a proton or sodium gradient. F-type ATPases consist of two structural domains, F(1) containing the extramembraneous catalytic core and F(0) containing the membrane proton channel, linked together by a central stalk and a peripheral stalk. During catalysis, ATP synthesis in the catalytic domain of F(1) is coupled via a rotary mechanism of the central stalk subunits to proton translocation. Key component of the F(0) channel; it plays a direct role in translocation across the membrane. A homomeric c-ring of between 10-14 subunits forms the central stalk rotor element with the F(1) delta and epsilon subunits. The polypeptide is ATP synthase subunit c (Leptothrix cholodnii (strain ATCC 51168 / LMG 8142 / SP-6) (Leptothrix discophora (strain SP-6))).